Reading from the N-terminus, the 703-residue chain is Protein teflon (703 aa).

Residues 32–55 (MFCHFCKDIFTHLPEFMRHLQWSH) form a C2H2-type 1 zinc finger. Disordered regions lie at residues 78–111 (TSEDDVQSQANSCSSGDSGLAGEMEDADGEPGSS), 138–161 (SHEQSYSKTPPDSRTEGFRCARKP), and 339–434 (SQQP…SKLE). Composition is skewed to polar residues over residues 84 to 94 (QSQANSCSSGD) and 138 to 147 (SHEQSYSKTP). Over residues 148–161 (PDSRTEGFRCARKP) the composition is skewed to basic and acidic residues. Polar residues-rich tracts occupy residues 339–352 (SQQPSELNTTNNAV) and 364–373 (SLTVISSSPI). C2H2-type zinc fingers lie at residues 649–672 (YFCECCEEIFPNEARYKKHVQSVH) and 677–700 (FTCSECGKSFKRLYFYEKHLKTVH).

This sequence belongs to the Teflon family.

Its subcellular location is the nucleus. The protein resides in the chromosome. In terms of biological role, specifically required in males for proper segregation of autosomal bivalents at meiosis I. Expression is required in the male germ line prior to spermatocyte stage S4. May have a role as a bridging molecule maintaining adhesion to hold autosome bivalents together via heterochromatic connections. The polypeptide is Protein teflon (Drosophila pseudoobscura pseudoobscura (Fruit fly)).